The following is a 402-amino-acid chain: Ferrochelatase, mitochondrial (402 aa).

A mitochondrion-targeting transit peptide spans 1–33; sequence MAAAGRAARPLVAGGRQLRVPLRWRGQVAAAAP. R94, Y102, and S109 together coordinate protoporphyrin IX. C175 contacts [2Fe-2S] cluster. Residues H209 and D362 contribute to the active site. Residues C382, C385, and C390 each coordinate [2Fe-2S] cluster.

This sequence belongs to the ferrochelatase family. Homodimer. Homotetramer. It depends on [2Fe-2S] cluster as a cofactor.

The protein localises to the mitochondrion inner membrane. It carries out the reaction heme b + 2 H(+) = protoporphyrin IX + Fe(2+). Its pathway is porphyrin-containing compound metabolism; protoheme biosynthesis; protoheme from protoporphyrin-IX: step 1/1. Catalyzes the ferrous insertion into protoporphyrin IX. This chain is Ferrochelatase, mitochondrial, found in Gallus gallus (Chicken).